A 137-amino-acid polypeptide reads, in one-letter code: Translation initiation factor 2 subunit beta (137 aa).

Belongs to the eIF-2-beta/eIF-5 family. Heterotrimer composed of an alpha, a beta and a gamma chain.

Functionally, eIF-2 functions in the early steps of protein synthesis by forming a ternary complex with GTP and initiator tRNA. In Archaeoglobus fulgidus (strain ATCC 49558 / DSM 4304 / JCM 9628 / NBRC 100126 / VC-16), this protein is Translation initiation factor 2 subunit beta (eif2b).